We begin with the raw amino-acid sequence, 478 residues long: Ribosomal RNA small subunit methyltransferase F (478 aa).

S-adenosyl-L-methionine is bound by residues 121–127 (ASAPGSK), Glu-145, Asp-172, and Asp-190. The active-site Nucleophile is the Cys-243.

The protein belongs to the class I-like SAM-binding methyltransferase superfamily. RsmB/NOP family.

It is found in the cytoplasm. It carries out the reaction cytidine(1407) in 16S rRNA + S-adenosyl-L-methionine = 5-methylcytidine(1407) in 16S rRNA + S-adenosyl-L-homocysteine + H(+). Its function is as follows. Specifically methylates the cytosine at position 1407 (m5C1407) of 16S rRNA. The polypeptide is Ribosomal RNA small subunit methyltransferase F (Shewanella sediminis (strain HAW-EB3)).